The primary structure comprises 248 residues: Probable transcriptional regulator LumQ (248 aa).

The HTH araC/xylS-type domain maps to 148 to 246 (VLIDNYIEQH…GMSPTRYQFF (99 aa)). 2 DNA-binding regions (H-T-H motif) span residues 165–186 (AELS…KSQM) and 213–236 (LSQV…RRLY).

Its function is as follows. Probable transcriptional regulator. Its target gene(s) is not yet known. This is Probable transcriptional regulator LumQ (lumQ) from Photobacterium leiognathi.